We begin with the raw amino-acid sequence, 454 residues long: uncharacterized protein (454 aa).

Residues 1-21 (MKYKTVKSIPLFLLGSIVFTA) form the signal peptide. The N-palmitoyl cysteine moiety is linked to residue Cys-22. A lipid anchor (S-diacylglycerol cysteine) is attached at Cys-22. A compositionally biased stretch (low complexity) spans 55–64 (ASSSSSTTTS). The segment at 55-87 (ASSSSSTTTSNDDNNQKGYFLETNRSTGTYDPN) is disordered. The segment covering 65–87 (NDDNNQKGYFLETNRSTGTYDPN) has biased composition (polar residues).

The protein localises to the cell membrane. This is an uncharacterized protein from Mycoplasma pneumoniae (strain ATCC 29342 / M129 / Subtype 1) (Mycoplasmoides pneumoniae).